A 310-amino-acid polypeptide reads, in one-letter code: GPN-loop GTPase 2 (310 aa).

A2 carries the post-translational modification N-acetylalanine. GTP is bound at residue 19 to 24 (GSGKTT). The short motif at 76-78 (GPN) is the Gly-Pro-Asn (GPN)-loop; involved in dimer interface element. 178–181 (SKMD) contacts GTP.

The protein belongs to the GPN-loop GTPase family. Heterodimers with GPN1 or GPN3. Binds to RNA polymerase II (RNAPII).

In terms of biological role, small GTPase required for proper localization of RNA polymerase II and III (RNAPII and RNAPIII). May act at an RNAP assembly step prior to nuclear import. The sequence is that of GPN-loop GTPase 2 (GPN2) from Bos taurus (Bovine).